A 362-amino-acid chain; its full sequence is UDP-N-acetylglucosamine--N-acetylmuramyl-(pentapeptide) pyrophosphoryl-undecaprenol N-acetylglucosamine transferase (362 aa).

UDP-N-acetyl-alpha-D-glucosamine is bound by residues 15 to 17, Asn-127, Arg-165, Ser-191, Ile-247, 266 to 271, and Gln-292; these read TGG and ALTVSE.

This sequence belongs to the glycosyltransferase 28 family. MurG subfamily.

Its subcellular location is the cell inner membrane. It carries out the reaction di-trans,octa-cis-undecaprenyl diphospho-N-acetyl-alpha-D-muramoyl-L-alanyl-D-glutamyl-meso-2,6-diaminopimeloyl-D-alanyl-D-alanine + UDP-N-acetyl-alpha-D-glucosamine = di-trans,octa-cis-undecaprenyl diphospho-[N-acetyl-alpha-D-glucosaminyl-(1-&gt;4)]-N-acetyl-alpha-D-muramoyl-L-alanyl-D-glutamyl-meso-2,6-diaminopimeloyl-D-alanyl-D-alanine + UDP + H(+). It functions in the pathway cell wall biogenesis; peptidoglycan biosynthesis. Functionally, cell wall formation. Catalyzes the transfer of a GlcNAc subunit on undecaprenyl-pyrophosphoryl-MurNAc-pentapeptide (lipid intermediate I) to form undecaprenyl-pyrophosphoryl-MurNAc-(pentapeptide)GlcNAc (lipid intermediate II). The polypeptide is UDP-N-acetylglucosamine--N-acetylmuramyl-(pentapeptide) pyrophosphoryl-undecaprenol N-acetylglucosamine transferase (Shewanella sp. (strain MR-4)).